A 505-amino-acid polypeptide reads, in one-letter code: Probable cytochrome P450 28c1 (505 aa).

Residue Cys-444 participates in heme binding.

Belongs to the cytochrome P450 family. It depends on heme as a cofactor.

It localises to the endoplasmic reticulum membrane. It is found in the microsome membrane. In terms of biological role, may be involved in the metabolism of insect hormones and in the breakdown of synthetic insecticides. The polypeptide is Probable cytochrome P450 28c1 (Cyp28c1) (Drosophila melanogaster (Fruit fly)).